The following is a 542-amino-acid chain: Chaperonin GroEL (542 aa).

Residues 29-32, 86-90, glycine 413, 476-478, and aspartate 492 each bind ATP; these read TLGP, DGTTT, and NAA. Residues 523–542 form a disordered region; sequence EPAAPAMPGGMDPSMMGGMM. Positions 526-542 are enriched in low complexity; that stretch reads APAMPGGMDPSMMGGMM.

The protein belongs to the chaperonin (HSP60) family. Forms a cylinder of 14 subunits composed of two heptameric rings stacked back-to-back. Interacts with the co-chaperonin GroES.

The protein localises to the cytoplasm. The enzyme catalyses ATP + H2O + a folded polypeptide = ADP + phosphate + an unfolded polypeptide.. Its function is as follows. Together with its co-chaperonin GroES, plays an essential role in assisting protein folding. The GroEL-GroES system forms a nano-cage that allows encapsulation of the non-native substrate proteins and provides a physical environment optimized to promote and accelerate protein folding. This chain is Chaperonin GroEL, found in Streptococcus uberis (strain ATCC BAA-854 / 0140J).